The sequence spans 130 residues: Holo-[acyl-carrier-protein] synthase (130 aa).

Asp-9 and Glu-58 together coordinate Mg(2+).

Belongs to the P-Pant transferase superfamily. AcpS family. Requires Mg(2+) as cofactor.

It is found in the cytoplasm. The catalysed reaction is apo-[ACP] + CoA = holo-[ACP] + adenosine 3',5'-bisphosphate + H(+). Transfers the 4'-phosphopantetheine moiety from coenzyme A to a Ser of acyl-carrier-protein. This Mycolicibacterium paratuberculosis (strain ATCC BAA-968 / K-10) (Mycobacterium paratuberculosis) protein is Holo-[acyl-carrier-protein] synthase.